Here is a 619-residue protein sequence, read N- to C-terminus: 1-deoxy-D-xylulose-5-phosphate synthase (619 aa).

Residues H74 and 115-117 (GHS) each bind thiamine diphosphate. Position 146 (D146) interacts with Mg(2+). Residues 147 to 148 (GA), N175, Y285, and E365 contribute to the thiamine diphosphate site. N175 contacts Mg(2+).

The protein belongs to the transketolase family. DXPS subfamily. As to quaternary structure, homodimer. Mg(2+) is required as a cofactor. The cofactor is thiamine diphosphate.

It catalyses the reaction D-glyceraldehyde 3-phosphate + pyruvate + H(+) = 1-deoxy-D-xylulose 5-phosphate + CO2. Its pathway is metabolic intermediate biosynthesis; 1-deoxy-D-xylulose 5-phosphate biosynthesis; 1-deoxy-D-xylulose 5-phosphate from D-glyceraldehyde 3-phosphate and pyruvate: step 1/1. Its function is as follows. Catalyzes the acyloin condensation reaction between C atoms 2 and 3 of pyruvate and glyceraldehyde 3-phosphate to yield 1-deoxy-D-xylulose-5-phosphate (DXP). This Clostridium perfringens (strain 13 / Type A) protein is 1-deoxy-D-xylulose-5-phosphate synthase.